The following is a 303-amino-acid chain: ATP-dependent Clp protease ATP-binding subunit CLPT3, chloroplastic (303 aa).

Residues 1-37 (MLLANAPHNGCSRLQQVTLLRASGAKLHRKRALTVVA) constitute a chloroplast transit peptide. Disordered stretches follow at residues 185–214 (ASTE…RDSD) and 278–303 (RDDN…DEYE).

Belongs to the ClpA/ClpB family.

It localises to the plastid. Its subcellular location is the chloroplast. Its function is as follows. Accessory protein regulating the assembly of the plastid Clp protease system. This chain is ATP-dependent Clp protease ATP-binding subunit CLPT3, chloroplastic, found in Chlamydomonas reinhardtii (Chlamydomonas smithii).